The primary structure comprises 200 residues: Ribosomal RNA large subunit methyltransferase E (200 aa).

Residues Gly49, Trp51, Asp69, Asp87, and Asp111 each contribute to the S-adenosyl-L-methionine site. The Proton acceptor role is filled by Lys151.

It belongs to the class I-like SAM-binding methyltransferase superfamily. RNA methyltransferase RlmE family.

Its subcellular location is the cytoplasm. It catalyses the reaction uridine(2552) in 23S rRNA + S-adenosyl-L-methionine = 2'-O-methyluridine(2552) in 23S rRNA + S-adenosyl-L-homocysteine + H(+). Its function is as follows. Specifically methylates the uridine in position 2552 of 23S rRNA at the 2'-O position of the ribose in the fully assembled 50S ribosomal subunit. The sequence is that of Ribosomal RNA large subunit methyltransferase E from Lawsonia intracellularis (strain PHE/MN1-00).